Here is a 287-residue protein sequence, read N- to C-terminus: ATP synthase gamma chain (287 aa).

It belongs to the ATPase gamma chain family. F-type ATPases have 2 components, CF(1) - the catalytic core - and CF(0) - the membrane proton channel. CF(1) has five subunits: alpha(3), beta(3), gamma(1), delta(1), epsilon(1). CF(0) has three main subunits: a, b and c.

It localises to the cell inner membrane. Its function is as follows. Produces ATP from ADP in the presence of a proton gradient across the membrane. The gamma chain is believed to be important in regulating ATPase activity and the flow of protons through the CF(0) complex. The sequence is that of ATP synthase gamma chain from Parabacteroides distasonis (strain ATCC 8503 / DSM 20701 / CIP 104284 / JCM 5825 / NCTC 11152).